A 251-amino-acid chain; its full sequence is 5'-nucleotidase SurE (251 aa).

Asp9, Asp10, Ser40, and Asn94 together coordinate a divalent metal cation.

It belongs to the SurE nucleotidase family. The cofactor is a divalent metal cation.

It localises to the cytoplasm. It carries out the reaction a ribonucleoside 5'-phosphate + H2O = a ribonucleoside + phosphate. Nucleotidase that shows phosphatase activity on nucleoside 5'-monophosphates. The chain is 5'-nucleotidase SurE from Aquifex aeolicus (strain VF5).